The following is a 424-amino-acid chain: MPLLWLRGFLLASCWIIVRSSPTPGSEGPGAAPDCPSCALATLPKDVPNSQPEMVEAVKKHILNMLHLKKRPEVTQPVPKAALLNAIRKLHVGKVGENGYVEIEDDIGRRAEMNELMEQTSEIITFAESGTARKTLHFEISKEGSDLSVVERAEVWLFLKVPKANRTRTKVTIQLLQKQPQGGVDAGEEAEEMGLMEERNEVLISEKVVDARKSTWHIFPVSSSIQRLLDQGKSSLDVRIACEQCHETGASLVLLGKKKKKEEEGEGKKKDGGDGGAGADEDKEQSHRPFLMLQARQSEDHPHRRRRRGLECDGKVNICCKKQFFVSFKDIGWNDWIIAPSGYHANYCEGECPSHIAGTSGSSLSFHSTVINHYRMRGHSPFANLKSCCVPTKLRPMSMLYYDDGQNIIKKDIQNMIVEECGCS.

The N-terminal stretch at 1–20 is a signal peptide; sequence MPLLWLRGFLLASCWIIVRS. The propeptide occupies 21-308; sequence SPTPGSEGPG…EDHPHRRRRR (288 aa). The N-linked (GlcNAc...) asparagine glycan is linked to Asn-165. The segment at 257 to 288 is disordered; that stretch reads KKKKKEEEGEGKKKDGGDGGAGADEDKEQSHR. Over residues 261–273 the composition is skewed to basic and acidic residues; that stretch reads KEEEGEGKKKDGG. 4 cysteine pairs are disulfide-bonded: Cys-312-Cys-320, Cys-319-Cys-389, Cys-348-Cys-421, and Cys-352-Cys-423.

It belongs to the TGF-beta family. In terms of assembly, dimeric, linked by one or more disulfide bonds. Inhibin A is a dimer of alpha/INHA and beta-A/INHBA. Activin A is a homodimer of beta-A/INHBA. Activin AB is a dimer of beta-A/INHBA and beta-B/INHBB. Interacts with FST and FSTL3; these interactions prevent activin A interaction to its type II receptor. Activin A interacts with ACVR2A. Activin A interacts with BMPR2. Inhibin A interacts with ACVR1; this interaction creates a non-signaling complex (NSC) that inhibits ACVR1-mediated BMP signaling. Inhibin A interacts with ACVR2A.

Its subcellular location is the secreted. Its function is as follows. Inhibins/activins are involved in regulating a number of diverse functions such as hypothalamic and pituitary hormone secretion, gonadal hormone secretion, germ cell development and maturation, erythroid differentiation, insulin secretion, nerve cell survival, embryonic axial development or bone growth, depending on their subunit composition. Functionally, activin A is a homodimer of INHBA that plays a role in several essential biological processes including embryonic development, stem cell maintenance and differentiation, haematopoiesis, cell proliferation and tissue fibrosis. Signals through type I (such as ACVR1B or ACVR1C) and type II receptors (such as ACVR2A, ACVR2B or BMPR2) which, upon ligand binding, phosphorylate SMAD2 and SMAD3 intracellular signaling mediators that form a complex with SMAD4, translocate to the nucleus and modulate gene expression. Can also activate alternative non-canonical intracellular signaling pathways including the p38 MAPK, extracellular signal-regulated kinases 1/2 (ERK1/2) and c-Jun N-terminal kinases (JNKs) to modulate cell migration and differentiation. Alternatively, promotes osteoblastic differentiation via ACVRL1-SMAD1/5/9 pathway. In addition, can engage the type I receptor ACVR1 to form an ACVR1-activin A-type II receptor non-signaling complex (NSC) that renders receptors unavailable for engagement with BMPs, hence resulting in an apparent inhibition of ACVR1-mediated BMP signaling. Inhibin A is a dimer of alpha/INHA and beta-A/INHBA that functions as a feedback regulator in the hypothalamic-pituitary-gonadal (HPG) axis. Inhibits the secretion of FSH from the anterior pituitary gland by acting on pituitary gonadotrope cells. Antagonizes activin A by binding to the proteoglycan, betaglycan, and forming a stable complex with and, thereby, sequestering type II activin receptors while excluding type I receptor. The sequence is that of Inhibin beta A chain (INHBA) from Felis catus (Cat).